Reading from the N-terminus, the 174-residue chain is Nucleoside diphosphate kinase (174 aa).

ATP-binding residues include lysine 14, phenylalanine 62, arginine 90, threonine 96, and arginine 107. Histidine 123 acts as the Pros-phosphohistidine intermediate in catalysis.

It belongs to the NDK family. It depends on Mg(2+) as a cofactor.

Its subcellular location is the cytoplasm. The catalysed reaction is a 2'-deoxyribonucleoside 5'-diphosphate + ATP = a 2'-deoxyribonucleoside 5'-triphosphate + ADP. It catalyses the reaction a ribonucleoside 5'-diphosphate + ATP = a ribonucleoside 5'-triphosphate + ADP. Functionally, major role in the synthesis of nucleoside triphosphates other than ATP. The ATP gamma phosphate is transferred to the NDP beta phosphate via a ping-pong mechanism, using a phosphorylated active-site intermediate. The sequence is that of Nucleoside diphosphate kinase from Thermococcus kodakarensis (strain ATCC BAA-918 / JCM 12380 / KOD1) (Pyrococcus kodakaraensis (strain KOD1)).